The primary structure comprises 155 residues: MSKSDLNLLVENIKFEHLNVFYDFVVSVLNALSISDFELSVILCDNAYIQELNNKFRNKNEPTDVLSFNYNEHNELNEDLVDGINYKIQGDLVISFEYLKFSAQEFNVEIYEELQRVTIHGILHLMGYKHETNDFQKEGMLILQENILKENKRVF.

Zn(2+)-binding residues include H120, H124, and H130.

Belongs to the endoribonuclease YbeY family. Zn(2+) is required as a cofactor.

It is found in the cytoplasm. Functionally, single strand-specific metallo-endoribonuclease involved in late-stage 70S ribosome quality control and in maturation of the 3' terminus of the 16S rRNA. The polypeptide is Endoribonuclease YbeY (Borreliella burgdorferi (strain ATCC 35210 / DSM 4680 / CIP 102532 / B31) (Borrelia burgdorferi)).